The chain runs to 337 residues: Tryptophan--tRNA ligase (337 aa).

Residues 11-13 (QPT) and 19-20 (GN) contribute to the ATP site. The short motif at 12–20 (PTGALHLGN) is the 'HIGH' region element. An L-tryptophan-binding site is contributed by D135. Residues 147-149 (GED), V191, and 200-204 (KMSKS) contribute to the ATP site. A 'KMSKS' region motif is present at residues 200–204 (KMSKS).

It belongs to the class-I aminoacyl-tRNA synthetase family. In terms of assembly, homodimer.

It localises to the cytoplasm. The enzyme catalyses tRNA(Trp) + L-tryptophan + ATP = L-tryptophyl-tRNA(Trp) + AMP + diphosphate + H(+). In terms of biological role, catalyzes the attachment of tryptophan to tRNA(Trp). This Parasynechococcus marenigrum (strain WH8102) protein is Tryptophan--tRNA ligase.